The sequence spans 607 residues: TOM1-like protein 8 (607 aa).

The VHS domain occupies 9–138; that stretch reads ATSDMLIGPD…ELLRAGIVFP (130 aa). Residues 141–175 are disordered; it reads PQITPSSGQNGPSTRYPQNSRNARQEAIDTSTESE. The 89-residue stretch at 175 to 263 folds into the GAT domain; the sequence is EFPTLSLTEI…LLAKHEAIAS (89 aa). Residue serine 297 is modified to Phosphoserine. Polar residues predominate over residues 355–379; it reads NNCESSTPTSNPHANHQKVQQNYSN. Disordered regions lie at residues 355 to 393, 407 to 460, and 555 to 582; these read NNCESSTPTSNPHANHQKVQQNYSNGFGPGHQEQSYYGQ, QPSS…SPTH, and DNGNNNTNPYQVSSHQPPPMMKPMNKKP. Phosphoserine is present on serine 410. Low complexity predominate over residues 448 to 460; sequence QSPSSSPQYSPTH. The span at 555–569 shows a compositional bias: polar residues; the sequence is DNGNNNTNPYQVSSH.

This sequence belongs to the TOM1 family. In terms of tissue distribution, specifically expressed in siliques and flowers.

The protein resides in the membrane. Functionally, might contribute to the loading of the ESCRT machinery. The chain is TOM1-like protein 8 from Arabidopsis thaliana (Mouse-ear cress).